The following is a 409-amino-acid chain: Protein naked cuticle homolog 2 (409 aa).

Residue G2 is the site of N-myristoyl glycine attachment. The region spanning 109–144 is the EF-hand domain; that stretch reads AEDNRQEWVFTLYDFDNSGKVTKEDMSSLMHTIYDV. Ca(2+)-binding residues include D122, D124, S126, K128, and D133. Disordered regions lie at residues 160-224, 243-315, 346-366, and 388-409; these read LRVK…YCVD, TSRF…RYPG, SHTHAHTPSGLQHSHSRRIRS, and RHEHHHHHEHHHHHHYHHYHQT. Composition is skewed to basic and acidic residues over residues 171–185 and 193–224; these read AARRRDATHTERETS and VRSEEHRSADRRQSTHIRGQTEAHEGNHYCVD. Residues 247 to 268 show a composition bias toward low complexity; the sequence is DSSSPDADQDPPSRSSHSQSRP. The segment covering 389–409 has biased composition (basic residues); that stretch reads HEHHHHHEHHHHHHYHHYHQT.

The protein belongs to the NKD family. In terms of tissue distribution, expressed ubiquitously until 1 dpf, when expression becomes confined to the anterior CNS, with slight expression in the developing tail.

It localises to the cell membrane. It is found in the cytoplasm. Its function is as follows. Cell autonomous antagonist of both the canonical and non-canonical Wnt signaling pathways. The protein is Protein naked cuticle homolog 2 (nkd2) of Danio rerio (Zebrafish).